The sequence spans 248 residues: PF03932 family protein CutC (248 aa).

The protein belongs to the CutC family. In terms of assembly, homodimer.

It is found in the cytoplasm. In Salmonella typhimurium (strain LT2 / SGSC1412 / ATCC 700720), this protein is PF03932 family protein CutC.